The chain runs to 841 residues: MAP7 domain-containing protein 1 (841 aa).

Disordered regions lie at residues 1-151 (MESG…ERAK) and 184-208 (EQRL…EKNK). The segment covering 22–52 (PPEPRPSPEGDPSPPPPPMSALVPDTPPDTP) has biased composition (pro residues). Phosphothreonine occurs at positions 47 and 51. A phosphoserine mark is found at Ser70, Ser86, and Ser93. A Phosphothreonine modification is found at Thr97. 2 positions are modified to phosphoserine: Ser113 and Ser116. Thr118 carries the post-translational modification Phosphothreonine. Phosphoserine is present on residues Ser123 and Ser125. A coiled-coil region spans residues 128–222 (TKQEVKKAGE…AAIQRSVKKT (95 aa)). A compositionally biased stretch (basic and acidic residues) spans 130 to 151 (QEVKKAGERHKLAKERREERAK). Residues Ser254, Ser273, Ser313, Ser366, and Ser399 each carry the phosphoserine modification. Residues 316-813 (TLPRNGRDQG…PSGDKSLSRT (498 aa)) form a disordered region. Residues 365 to 377 (ASASPLTPCSVTR) show a composition bias toward polar residues. The span at 405–435 (RRPEASPVQKKEKKDKERENEKEKSALARER) shows a compositional bias: basic and acidic residues. Residues 412-441 (VQKKEKKDKERENEKEKSALARERSLKKRQ) are a coiled coil. Ser442, Ser446, Ser452, Ser454, and Ser460 each carry phosphoserine. The span at 460-473 (SPKSKARPSSPSTS) shows a compositional bias: low complexity. Lys462 participates in a covalent cross-link: Glycyl lysine isopeptide (Lys-Gly) (interchain with G-Cter in SUMO2). Residues Ser479 and Ser496 each carry the phosphoserine modification. The span at 479-497 (SPCPSPGPGHTLPPKPPSP) shows a compositional bias: pro residues. Positions 523–539 (PEDKSQSKRRASNEKES) are enriched in basic and acidic residues. Ser544, Ser548, and Ser552 each carry phosphoserine. Positions 544-561 (SPAPSPAPSPTPAPPQKE) are enriched in pro residues. Thr554 is modified (phosphothreonine). Residues 562–576 (QPPAETPTDAAVLTS) show a composition bias toward low complexity. The segment covering 577–586 (PPAPAPPVTP) has biased composition (pro residues). Residues 593 to 721 (TTDREEATRL…LEEIMKRTRK (129 aa)) adopt a coiled-coil conformation. Over residues 594–735 (TDREEATRLL…ETKQKQDSKE (142 aa)) the composition is skewed to basic and acidic residues. Phosphoserine occurs at positions 742 and 753. Phosphothreonine is present on residues Thr813 and Thr816. Ser834 is modified (phosphoserine).

The protein belongs to the MAP7 family.

It is found in the cytoplasm. The protein localises to the cytoskeleton. It localises to the spindle. Its subcellular location is the microtubule organizing center. The protein resides in the centrosome. It is found in the midbody. Microtubule-stabilizing protein involved in the control of cell motility and neurite outgrowth. Facilitate microtubule stabilization through the maintenance of acetylated stable microtubules. The polypeptide is MAP7 domain-containing protein 1 (MAP7D1) (Homo sapiens (Human)).